Consider the following 359-residue polypeptide: MITVNVDLGDRAYPIHIGAGLIGRAELFAPHIKGSSVTIVTNTTVDPLYGDALRAALAPLGKRVSTVVLPDGEAYKNWETLNLIFDGLLTDRADRKTTLVALGGGVVGDMTGFAAACYMRGVPFIQVPTTLLSQVDSSVGGKTGINHPLGKNMIGAFYQPQAVIADIGALTTLPDRELAAGVAEIIKTGAIADAEFFDWIEANVDALNRRDPAALAHAVKRSCEIKASVVAADEREGGLRAILNFGHTFGHAIEAGLGYGEWLHGEAVGCGMVMAGDLSVRLGLLDEASRQRLDAVIAAAHLPTRGPALGDARYLDLMRVDKKAEAGAIKFILLKRFGDTLITQAPDEAVFATLAQTTH.

Residues 71 to 76, 105 to 109, 129 to 130, Lys142, and Lys151 each bind NAD(+); these read DGEAYK, GVVGD, and TT. Residues Glu184, His247, and His264 each coordinate Zn(2+).

This sequence belongs to the sugar phosphate cyclases superfamily. Dehydroquinate synthase family. Co(2+) is required as a cofactor. Zn(2+) serves as cofactor. The cofactor is NAD(+).

It is found in the cytoplasm. It carries out the reaction 7-phospho-2-dehydro-3-deoxy-D-arabino-heptonate = 3-dehydroquinate + phosphate. Its pathway is metabolic intermediate biosynthesis; chorismate biosynthesis; chorismate from D-erythrose 4-phosphate and phosphoenolpyruvate: step 2/7. Its function is as follows. Catalyzes the conversion of 3-deoxy-D-arabino-heptulosonate 7-phosphate (DAHP) to dehydroquinate (DHQ). This is 3-dehydroquinate synthase from Burkholderia lata (strain ATCC 17760 / DSM 23089 / LMG 22485 / NCIMB 9086 / R18194 / 383).